Consider the following 113-residue polypeptide: Large ribosomal subunit protein uL24 (113 aa).

It belongs to the universal ribosomal protein uL24 family. In terms of assembly, part of the 50S ribosomal subunit.

One of two assembly initiator proteins, it binds directly to the 5'-end of the 23S rRNA, where it nucleates assembly of the 50S subunit. Its function is as follows. One of the proteins that surrounds the polypeptide exit tunnel on the outside of the subunit. This is Large ribosomal subunit protein uL24 from Micrococcus luteus (Micrococcus lysodeikticus).